The sequence spans 777 residues: 1,4-alpha-glucan branching enzyme GlgB (777 aa).

Asp408 acts as the Nucleophile in catalysis. Glu461 (proton donor) is an active-site residue.

It belongs to the glycosyl hydrolase 13 family. GlgB subfamily. Monomer.

It catalyses the reaction Transfers a segment of a (1-&gt;4)-alpha-D-glucan chain to a primary hydroxy group in a similar glucan chain.. It participates in glycan biosynthesis; glycogen biosynthesis. Catalyzes the formation of the alpha-1,6-glucosidic linkages in glycogen by scission of a 1,4-alpha-linked oligosaccharide from growing alpha-1,4-glucan chains and the subsequent attachment of the oligosaccharide to the alpha-1,6 position. The sequence is that of 1,4-alpha-glucan branching enzyme GlgB from Actinobacillus pleuropneumoniae serotype 7 (strain AP76).